Here is a 237-residue protein sequence, read N- to C-terminus: Large ribosomal subunit protein uL1 (237 aa).

Belongs to the universal ribosomal protein uL1 family. As to quaternary structure, part of the 50S ribosomal subunit.

Functionally, binds directly to 23S rRNA. The L1 stalk is quite mobile in the ribosome, and is involved in E site tRNA release. Its function is as follows. Protein L1 is also a translational repressor protein, it controls the translation of the L11 operon by binding to its mRNA. The sequence is that of Large ribosomal subunit protein uL1 from Synechococcus sp. (strain ATCC 27144 / PCC 6301 / SAUG 1402/1) (Anacystis nidulans).